The sequence spans 121 residues: Large ribosomal subunit protein bL19 (121 aa).

This sequence belongs to the bacterial ribosomal protein bL19 family.

Functionally, this protein is located at the 30S-50S ribosomal subunit interface and may play a role in the structure and function of the aminoacyl-tRNA binding site. The polypeptide is Large ribosomal subunit protein bL19 (Borreliella burgdorferi (strain ZS7) (Borrelia burgdorferi)).